Here is a 292-residue protein sequence, read N- to C-terminus: NAD kinase (292 aa).

Asp73 serves as the catalytic Proton acceptor. Residues 73–74 (DG), 147–148 (NE), His158, Arg175, Asp177, 188–193 (TGYSLS), and Gln248 each bind NAD(+).

This sequence belongs to the NAD kinase family. Requires a divalent metal cation as cofactor.

The protein resides in the cytoplasm. It carries out the reaction NAD(+) + ATP = ADP + NADP(+) + H(+). Its function is as follows. Involved in the regulation of the intracellular balance of NAD and NADP, and is a key enzyme in the biosynthesis of NADP. Catalyzes specifically the phosphorylation on 2'-hydroxyl of the adenosine moiety of NAD to yield NADP. In Buchnera aphidicola subsp. Baizongia pistaciae (strain Bp), this protein is NAD kinase.